The sequence spans 79 residues: UPF0154 protein SUB0399 (79 aa).

A helical membrane pass occupies residues 4–24; it reads AIWILLIVLALIGGLFGGVFI.

This sequence belongs to the UPF0154 family.

The protein resides in the cell membrane. This chain is UPF0154 protein SUB0399, found in Streptococcus uberis (strain ATCC BAA-854 / 0140J).